Reading from the N-terminus, the 111-residue chain is MSGYFVLKASGTQYMFNLHAGNHEIILTSERYTSKASAQDGIASVQKNAPDDARYQRLTAKDGSPYFSLTATNGQSIGRSEMYKTTQARDNGIASVKSNAPGAPTKDQTQA.

2 repeat units span residues 9 to 57 and 60 to 108. A disordered region spans residues 86–111; sequence TQARDNGIASVKSNAPGAPTKDQTQA.

It belongs to the UPF0339 family. Duplicated subfamily.

The protein is UPF0339 protein BP0521 of Bordetella pertussis (strain Tohama I / ATCC BAA-589 / NCTC 13251).